The chain runs to 258 residues: MLAKRIIPCLDVRDGQVVKGVQFRNHEIIGDIVPLAKRYAEEGADELVFYDITASSDGRVVDKSWVSRVAEVIDIPFCVAGGIKSLEDAAKILSFGADKISINSPALADPTLITRLADRFGVQCIVVGIDTWYDAETGKYHVNQYTGDESRTRVTQWETLDWVQEVQKRGAGEIVLNMMNQDGVRNGYDLEQLKKVREVCHVPLIASGGAGTMEHFLEAFRDADVDGALAASVFHKQIINIGELKAYLATQGVEIRIC.

Residues Asp11 and Asp130 contribute to the active site.

It belongs to the HisA/HisF family. Heterodimer of HisH and HisF.

It is found in the cytoplasm. The catalysed reaction is 5-[(5-phospho-1-deoxy-D-ribulos-1-ylimino)methylamino]-1-(5-phospho-beta-D-ribosyl)imidazole-4-carboxamide + L-glutamine = D-erythro-1-(imidazol-4-yl)glycerol 3-phosphate + 5-amino-1-(5-phospho-beta-D-ribosyl)imidazole-4-carboxamide + L-glutamate + H(+). It participates in amino-acid biosynthesis; L-histidine biosynthesis; L-histidine from 5-phospho-alpha-D-ribose 1-diphosphate: step 5/9. Its function is as follows. IGPS catalyzes the conversion of PRFAR and glutamine to IGP, AICAR and glutamate. The HisF subunit catalyzes the cyclization activity that produces IGP and AICAR from PRFAR using the ammonia provided by the HisH subunit. The polypeptide is Imidazole glycerol phosphate synthase subunit HisF (Escherichia coli O127:H6 (strain E2348/69 / EPEC)).